The primary structure comprises 85 residues: Small ribosomal subunit protein bS18 (85 aa).

Belongs to the bacterial ribosomal protein bS18 family. Part of the 30S ribosomal subunit. Forms a tight heterodimer with protein bS6.

In terms of biological role, binds as a heterodimer with protein bS6 to the central domain of the 16S rRNA, where it helps stabilize the platform of the 30S subunit. The sequence is that of Small ribosomal subunit protein bS18 from Hamiltonella defensa subsp. Acyrthosiphon pisum (strain 5AT).